We begin with the raw amino-acid sequence, 126 residues long: MFPGGGKFNPRMMKQMQKMMKDFGMDAEDLKAVKVTIELEDTILVFEKPKVQVMDMLGNKTYSITGKAKKVAKAEEKIEDVEVKVEVTEEDVEMVSSQCGVSKEEAKKALEEANGDLAEAILKLGN.

The 68-residue stretch at 10–77 (PRMMKQMQKM…AKKVAKAEEK (68 aa)) folds into the NAC-A/B domain.

The protein belongs to the NAC-alpha family. Homodimer. Interacts with the ribosome. Binds ribosomal RNA.

Functionally, contacts the emerging nascent chain on the ribosome. This chain is Nascent polypeptide-associated complex protein, found in Methanococcus maripaludis (strain C6 / ATCC BAA-1332).